A 111-amino-acid polypeptide reads, in one-letter code: Complement inhibitor CirpT1 (111 aa).

A signal peptide spans 1 to 19 (MATLIAARTKRKAPRVRIF). 4 cysteine pairs are disulfide-bonded: Cys-40–Cys-64, Cys-59–Cys-98, Cys-76–Cys-99, and Cys-85–Cys-104.

Belongs to the CirpT family. As to expression, expressed in salivary glands.

Its subcellular location is the secreted. In terms of biological role, complement inhibitor. Prevents complement-mediated activation of C5 by sterically preventing direct binding of C5 to its convertase (binding with domains MG4 and MG5). Binds C5 at a different binding site than the other tick complement inhibitors OmCI and RaCI3, and the drug eculizumab. Inhibits the complement in human, rat and guinea pig, and also shows a reduced inhibition in rabbit and pig. The protein is Complement inhibitor CirpT1 of Rhipicephalus pulchellus (Yellow backed tick).